The following is a 752-amino-acid chain: Catalase-peroxidase 1 (752 aa).

The interval 1-45 (MPPNTPDASDARPPQADTETHSHSESENPVIESPKPKAHAPLTNQ) is disordered. The tryptophyl-tyrosyl-methioninium (Trp-Tyr) (with M-270) cross-link spans 116 to 244 (WHAAGTYRIF…YGATTMGLIY (129 aa)). His-117 acts as the Proton acceptor in catalysis. Residues 244–270 (YVNPEGPEGKPDPLAAAHDIRETFGRM) constitute a cross-link (tryptophyl-tyrosyl-methioninium (Tyr-Met) (with W-116)). His-285 serves as a coordination point for heme b.

The protein belongs to the peroxidase family. Peroxidase/catalase subfamily. Homodimer or homotetramer. Heme b is required as a cofactor. In terms of processing, formation of the three residue Trp-Tyr-Met cross-link is important for the catalase, but not the peroxidase activity of the enzyme.

It catalyses the reaction H2O2 + AH2 = A + 2 H2O. The enzyme catalyses 2 H2O2 = O2 + 2 H2O. Its function is as follows. Bifunctional enzyme with both catalase and broad-spectrum peroxidase activity. May play a role in the intracellular survival of mycobacteria. This is Catalase-peroxidase 1 from Mycolicibacterium fortuitum (Mycobacterium fortuitum).